Reading from the N-terminus, the 139-residue chain is D-ribose pyranase (139 aa).

The Proton donor role is filled by His-20. Substrate is bound by residues Asp-28, His-106, and 128–130 (YAN).

This sequence belongs to the RbsD / FucU family. RbsD subfamily. Homodecamer.

The protein localises to the cytoplasm. The catalysed reaction is beta-D-ribopyranose = beta-D-ribofuranose. It participates in carbohydrate metabolism; D-ribose degradation; D-ribose 5-phosphate from beta-D-ribopyranose: step 1/2. Functionally, catalyzes the interconversion of beta-pyran and beta-furan forms of D-ribose. In Aliivibrio fischeri (strain ATCC 700601 / ES114) (Vibrio fischeri), this protein is D-ribose pyranase.